The primary structure comprises 112 residues: Small ribosomal subunit protein uS17 (112 aa).

The protein belongs to the universal ribosomal protein uS17 family. In terms of assembly, part of the 30S ribosomal subunit.

Its function is as follows. One of the primary rRNA binding proteins, it binds specifically to the 5'-end of 16S ribosomal RNA. This chain is Small ribosomal subunit protein uS17, found in Thermotoga neapolitana (strain ATCC 49049 / DSM 4359 / NBRC 107923 / NS-E).